Consider the following 328-residue polypeptide: 4-hydroxythreonine-4-phosphate dehydrogenase (328 aa).

Threonine 125 contacts substrate. A divalent metal cation-binding residues include histidine 160, histidine 203, and histidine 269. 3 residues coordinate substrate: lysine 277, asparagine 286, and arginine 295.

This sequence belongs to the PdxA family. As to quaternary structure, homodimer. A divalent metal cation serves as cofactor.

The protein localises to the cytoplasm. The catalysed reaction is 4-(phosphooxy)-L-threonine + NAD(+) = 3-amino-2-oxopropyl phosphate + CO2 + NADH. The protein operates within cofactor biosynthesis; pyridoxine 5'-phosphate biosynthesis; pyridoxine 5'-phosphate from D-erythrose 4-phosphate: step 4/5. Catalyzes the NAD(P)-dependent oxidation of 4-(phosphooxy)-L-threonine (HTP) into 2-amino-3-oxo-4-(phosphooxy)butyric acid which spontaneously decarboxylates to form 3-amino-2-oxopropyl phosphate (AHAP). The chain is 4-hydroxythreonine-4-phosphate dehydrogenase from Synechococcus sp. (strain RCC307).